Here is a 152-residue protein sequence, read N- to C-terminus: Ribosome maturation factor RimP (152 aa).

Belongs to the RimP family.

The protein resides in the cytoplasm. Its function is as follows. Required for maturation of 30S ribosomal subunits. This chain is Ribosome maturation factor RimP, found in Idiomarina loihiensis (strain ATCC BAA-735 / DSM 15497 / L2-TR).